The chain runs to 65 residues: Alpha-conotoxin BnIA (65 aa).

An N-terminal signal peptide occupies residues 1–21 (MGMRMMFTMFLLVVLATTVVS). Residues 22-48 (FASDRASDGRNAAAKDKASDLVALTVK) constitute a propeptide that is removed on maturation. Intrachain disulfides connect Cys-50-Cys-56 and Cys-51-Cys-64. The ser-Xaa-Pro motif, crucial for potent interaction with nAChR stretch occupies residues 52–54 (SHP). A Cysteine amide modification is found at Cys-64.

It belongs to the conotoxin A superfamily. Expressed by the venom duct.

The protein localises to the secreted. Functionally, alpha-conotoxins act on postsynaptic membranes, they bind to the nicotinic acetylcholine receptors (nAChR) and thus inhibit them. This toxin inhibits acetylcholine-evoked currents reversibly in oocytes expressing the human alpha-7/CHRNA7 nAChR, and blocks nerve-evoked skeletal muscle contractions in isolated mouse neuromuscular preparations, but with a very low affinity. The chain is Alpha-conotoxin BnIA from Conus bandanus (Banded marble cone).